A 617-amino-acid chain; its full sequence is tRNA uridine 5-carboxymethylaminomethyl modification enzyme MnmG (617 aa).

FAD contacts are provided by residues 9 to 14, Val120, and Thr175; that span reads GAGHAG. 267–281 serves as a coordination point for NAD(+); it reads GPRYCPSIEDKVVRF. FAD is bound at residue Gln364.

This sequence belongs to the MnmG family. Homodimer. Heterotetramer of two MnmE and two MnmG subunits. Requires FAD as cofactor.

The protein resides in the cytoplasm. Its function is as follows. NAD-binding protein involved in the addition of a carboxymethylaminomethyl (cmnm) group at the wobble position (U34) of certain tRNAs, forming tRNA-cmnm(5)s(2)U34. This is tRNA uridine 5-carboxymethylaminomethyl modification enzyme MnmG from Onion yellows phytoplasma (strain OY-M).